Reading from the N-terminus, the 456-residue chain is Bifunctional protein GlmU (456 aa).

The interval 1-229 is pyrophosphorylase; sequence MLNNAMSVVI…LSEVEGVNNR (229 aa). Residues 11 to 14, K25, Q76, 81 to 82, 103 to 105, G140, E154, N169, and N227 contribute to the UDP-N-acetyl-alpha-D-glucosamine site; these read LAAG, GT, and YGD. D105 lines the Mg(2+) pocket. N227 serves as a coordination point for Mg(2+). Residues 230–250 are linker; sequence LQLSRLERVYQSEQAEKLLLA. Positions 251 to 456 are N-acetyltransferase; sequence GVMLRDPARF…EGWRRPVKKK (206 aa). Residues R333 and K351 each coordinate UDP-N-acetyl-alpha-D-glucosamine. Catalysis depends on H363, which acts as the Proton acceptor. UDP-N-acetyl-alpha-D-glucosamine-binding residues include Y366 and N377. Residues A380, 386–387, S405, A423, and R440 each bind acetyl-CoA; that span reads NY.

The protein in the N-terminal section; belongs to the N-acetylglucosamine-1-phosphate uridyltransferase family. It in the C-terminal section; belongs to the transferase hexapeptide repeat family. In terms of assembly, homotrimer. The cofactor is Mg(2+).

Its subcellular location is the cytoplasm. It carries out the reaction alpha-D-glucosamine 1-phosphate + acetyl-CoA = N-acetyl-alpha-D-glucosamine 1-phosphate + CoA + H(+). The catalysed reaction is N-acetyl-alpha-D-glucosamine 1-phosphate + UTP + H(+) = UDP-N-acetyl-alpha-D-glucosamine + diphosphate. It participates in nucleotide-sugar biosynthesis; UDP-N-acetyl-alpha-D-glucosamine biosynthesis; N-acetyl-alpha-D-glucosamine 1-phosphate from alpha-D-glucosamine 6-phosphate (route II): step 2/2. The protein operates within nucleotide-sugar biosynthesis; UDP-N-acetyl-alpha-D-glucosamine biosynthesis; UDP-N-acetyl-alpha-D-glucosamine from N-acetyl-alpha-D-glucosamine 1-phosphate: step 1/1. It functions in the pathway bacterial outer membrane biogenesis; LPS lipid A biosynthesis. In terms of biological role, catalyzes the last two sequential reactions in the de novo biosynthetic pathway for UDP-N-acetylglucosamine (UDP-GlcNAc). The C-terminal domain catalyzes the transfer of acetyl group from acetyl coenzyme A to glucosamine-1-phosphate (GlcN-1-P) to produce N-acetylglucosamine-1-phosphate (GlcNAc-1-P), which is converted into UDP-GlcNAc by the transfer of uridine 5-monophosphate (from uridine 5-triphosphate), a reaction catalyzed by the N-terminal domain. This chain is Bifunctional protein GlmU, found in Shigella flexneri serotype 5b (strain 8401).